We begin with the raw amino-acid sequence, 779 residues long: Ribosome-releasing factor 2, mitochondrial (779 aa).

A tr-type G domain is found at 68-353; sequence AKIRNIGIMA…AVTTYLPSPE (286 aa). GTP is bound by residues 77–84, 141–145, and 195–198; these read AHIDAGKT, DTPGH, and NKMD.

The protein belongs to the TRAFAC class translation factor GTPase superfamily. Classic translation factor GTPase family. EF-G/EF-2 subfamily.

It is found in the mitochondrion. It catalyses the reaction GTP + H2O = GDP + phosphate + H(+). In terms of biological role, mitochondrial GTPase that mediates the disassembly of ribosomes from messenger RNA at the termination of mitochondrial protein biosynthesis. Acts in collaboration with MRRF. GTP hydrolysis follows the ribosome disassembly and probably occurs on the ribosome large subunit. Not involved in the GTP-dependent ribosomal translocation step during translation elongation. This is Ribosome-releasing factor 2, mitochondrial (Gfm2) from Mus musculus (Mouse).